The following is a 152-amino-acid chain: MFDILVYLFENYFDAGNCPDSATLTRKLTMAGFDDEEITLALDWLSDLSRHDEEGYLAGLAESDSMRHFTEEEMEIIDTEGRGFIFFLEQAGVINPLQRELLIDRVIRMDGDTASIEKIKLVVLFDLWIQNQLTDRSIVEGLFVVSDSHQRH.

This sequence belongs to the Smg family.

In Nitrosomonas europaea (strain ATCC 19718 / CIP 103999 / KCTC 2705 / NBRC 14298), this protein is Protein Smg homolog.